We begin with the raw amino-acid sequence, 411 residues long: Tyrosine--tRNA ligase (411 aa).

Y34 lines the L-tyrosine pocket. The 'HIGH' region signature appears at 39–48 (CTATSLHIGS). Y171 and Q175 together coordinate L-tyrosine. The short motif at 231 to 235 (KMGKT) is the 'KMSKS' region element. Residue K234 coordinates ATP. Positions 345-411 (ISAYELFHEA…GKKRHILVRV (67 aa)) constitute an S4 RNA-binding domain.

Belongs to the class-I aminoacyl-tRNA synthetase family. TyrS type 1 subfamily. In terms of assembly, homodimer.

It is found in the cytoplasm. The catalysed reaction is tRNA(Tyr) + L-tyrosine + ATP = L-tyrosyl-tRNA(Tyr) + AMP + diphosphate + H(+). In terms of biological role, catalyzes the attachment of tyrosine to tRNA(Tyr) in a two-step reaction: tyrosine is first activated by ATP to form Tyr-AMP and then transferred to the acceptor end of tRNA(Tyr). In Rickettsia massiliae (strain Mtu5), this protein is Tyrosine--tRNA ligase.